A 92-amino-acid chain; its full sequence is Acylphosphatase (92 aa).

An Acylphosphatase-like domain is found at 6-92; that stretch reads RAHVYVSGRV…EGVDGFEIRR (87 aa). Active-site residues include Arg21 and Asn39.

The protein belongs to the acylphosphatase family.

The catalysed reaction is an acyl phosphate + H2O = a carboxylate + phosphate + H(+). This is Acylphosphatase (acyP) from Natronomonas pharaonis (strain ATCC 35678 / DSM 2160 / CIP 103997 / JCM 8858 / NBRC 14720 / NCIMB 2260 / Gabara) (Halobacterium pharaonis).